A 303-amino-acid chain; its full sequence is Flavin-dependent thymidylate synthase (303 aa).

The tract at residues 1 to 21 (MALTSEQRAEIEAQRSEPQLT) is disordered. The 214-residue stretch at 43-256 (GFLRVVDYMG…PATAAAFEEY (214 aa)) folds into the ThyX domain. FAD contacts are provided by residues Thr89, 112-114 (RHR), and Glu120. DUMP is bound by residues 109–112 (QWIR), 120–124 (EYSAR), and Arg195. The ThyX motif motif lies at 112–122 (RHRMASVNEYS). FAD-binding positions include 211 to 213 (DLH) and His217. Arg222 is a dUMP binding site. Arg222 functions as the Involved in ionization of N3 of dUMP, leading to its activation in the catalytic mechanism.

The protein belongs to the thymidylate synthase ThyX family. As to quaternary structure, homotetramer. Requires FAD as cofactor.

The enzyme catalyses dUMP + (6R)-5,10-methylene-5,6,7,8-tetrahydrofolate + NADPH + H(+) = dTMP + (6S)-5,6,7,8-tetrahydrofolate + NADP(+). Its pathway is pyrimidine metabolism; dTTP biosynthesis. Functionally, catalyzes the reductive methylation of 2'-deoxyuridine-5'-monophosphate (dUMP) to 2'-deoxythymidine-5'-monophosphate (dTMP) while utilizing 5,10-methylenetetrahydrofolate (mTHF) as the methyl donor, and NADPH and FADH(2) as the reductant. This is Flavin-dependent thymidylate synthase from Gluconobacter oxydans (strain 621H) (Gluconobacter suboxydans).